Reading from the N-terminus, the 288-residue chain is ATP synthase gamma chain (288 aa).

It belongs to the ATPase gamma chain family. In terms of assembly, F-type ATPases have 2 components, CF(1) - the catalytic core - and CF(0) - the membrane proton channel. CF(1) has five subunits: alpha(3), beta(3), gamma(1), delta(1), epsilon(1). CF(0) has three main subunits: a, b and c.

It localises to the cell membrane. Produces ATP from ADP in the presence of a proton gradient across the membrane. The gamma chain is believed to be important in regulating ATPase activity and the flow of protons through the CF(0) complex. The sequence is that of ATP synthase gamma chain from Staphylococcus aureus (strain bovine RF122 / ET3-1).